Consider the following 275-residue polypeptide: MGIRFYRAHTPGTRNRSVSDFHEITTSTPTKSLTHANHRARGRNHSGSITTRWRGGGHKRLYRQIDFRRDKVGVLARVATVEYDPNRSARIALLHYQDGSKRYILHPQGLAIGAEVMSSPEAPISIGNALPLVNMPLGTEVHNIELRPYNGGQLVRAAGAVAQLVAKEGGFGTLRMPSGEVRLVAKDCWATVGQVGHVESINLTLGKAGRSRWLDRRPRVRGSVMNACDHPHGGGEGRCPIGHPGPLTPWGKPALGQRTRARKKYSDALLVRRRK.

Positions 28 to 53 (TPTKSLTHANHRARGRNHSGSITTRW) are disordered.

This sequence belongs to the universal ribosomal protein uL2 family. In terms of assembly, part of the 50S ribosomal subunit.

It is found in the plastid. It localises to the chloroplast. The chain is Large ribosomal subunit protein uL2c (rpl2) from Nephroselmis olivacea (Green alga).